Consider the following 473-residue polypeptide: Probable acid phosphatase DDB_G0284755 (473 aa).

The Nucleophile role is filled by His-94. The Proton donor role is filled by Asp-359.

It belongs to the histidine acid phosphatase family.

The enzyme catalyses a phosphate monoester + H2O = an alcohol + phosphate. The polypeptide is Probable acid phosphatase DDB_G0284755 (Dictyostelium discoideum (Social amoeba)).